An 87-amino-acid chain; its full sequence is MALAVRVVYCGAUGYKSKYLQLKKKLEDEFPGRLDICGEGTPQATGFFEVMVAGKLIHSKKKGDGYVDTESKFLKLVAAIKAALAQG.

The segment at residues 10–13 is a cross-link (cysteinyl-selenocysteine (Cys-Sec); redox-active); it reads CGAU. Position 13 (Sec13) is a non-standard amino acid, selenocysteine. Cys37 carries the post-translational modification S-glutathionyl cysteine.

This sequence belongs to the SelWTH family. Selenoprotein W subfamily. Interacts with DPYSL2, PRDX1, YWHAB, YWHAG, HSP70 and HSP90. As to expression, highest levels detected in skeletal muscle, tongue, heart and brain. Expressed at significantly higher levels in female skeletal muscle than in male and at slightly higher levels in female cardiac muscle than in male (at protein level). Also detected at low levels in liver.

The protein resides in the cytoplasm. In terms of biological role, plays a role as a glutathione (GSH)-dependent antioxidant. May be involved in a redox-related process. May play a role in the myopathies of selenium deficiency. The protein is Selenoprotein W of Macaca mulatta (Rhesus macaque).